A 282-amino-acid chain; its full sequence is Deoxyribonuclease-1 (282 aa).

Positions 1–22 (MRGTRLMGLLLALAGLLQLGLS) are cleaved as a signal peptide. Asparagine 40 carries an N-linked (GlcNAc...) asparagine glycan. The active site involves glutamate 100. Cysteines 123 and 126 form a disulfide. Histidine 156 is a catalytic residue. An intrachain disulfide couples cysteine 195 to cysteine 231.

Belongs to the DNase I family. Ca(2+) serves as cofactor. Mg(2+) is required as a cofactor. In terms of processing, the only differences between the A and B forms and the C and D forms are in the compositions of the carbohydrate bound to Asn-40.

It is found in the secreted. Its subcellular location is the zymogen granule. The protein localises to the nucleus envelope. It catalyses the reaction Endonucleolytic cleavage to 5'-phosphodinucleotide and 5'-phosphooligonucleotide end-products.. In terms of biological role, serum endocuclease secreted into body fluids by a wide variety of exocrine and endocrine organs. Expressed by non-hematopoietic tissues and preferentially cleaves protein-free DNA. Among other functions, seems to be involved in cell death by apoptosis. Binds specifically to G-actin and blocks actin polymerization. Together with DNASE1L3, plays a key role in degrading neutrophil extracellular traps (NETs). NETs are mainly composed of DNA fibers and are released by neutrophils to bind pathogens during inflammation. Degradation of intravascular NETs by DNASE1 and DNASE1L3 is required to prevent formation of clots that obstruct blood vessels and cause organ damage following inflammation. The polypeptide is Deoxyribonuclease-1 (DNASE1) (Bos taurus (Bovine)).